A 352-amino-acid chain; its full sequence is tRNA N6-adenosine threonylcarbamoyltransferase (352 aa).

Positions 115 and 119 each coordinate Fe cation. Residues 138-142 (LVSGG), D171, G184, and N277 each bind substrate. D305 is a Fe cation binding site.

The protein belongs to the KAE1 / TsaD family. The cofactor is Fe(2+).

Its subcellular location is the cytoplasm. The enzyme catalyses L-threonylcarbamoyladenylate + adenosine(37) in tRNA = N(6)-L-threonylcarbamoyladenosine(37) in tRNA + AMP + H(+). Required for the formation of a threonylcarbamoyl group on adenosine at position 37 (t(6)A37) in tRNAs that read codons beginning with adenine. Is involved in the transfer of the threonylcarbamoyl moiety of threonylcarbamoyl-AMP (TC-AMP) to the N6 group of A37, together with TsaE and TsaB. TsaD likely plays a direct catalytic role in this reaction. This is tRNA N6-adenosine threonylcarbamoyltransferase from Variovorax paradoxus (strain S110).